Consider the following 243-residue polypeptide: Probable transcriptional regulatory protein Athe_0816 (243 aa).

This sequence belongs to the TACO1 family.

Its subcellular location is the cytoplasm. The chain is Probable transcriptional regulatory protein Athe_0816 from Caldicellulosiruptor bescii (strain ATCC BAA-1888 / DSM 6725 / KCTC 15123 / Z-1320) (Anaerocellum thermophilum).